A 196-amino-acid chain; its full sequence is Holliday junction branch migration complex subunit RuvA (196 aa).

The domain I stretch occupies residues 1-63 (MYEYFKGIIS…EDAELLYGFA (63 aa)). The segment at 64-142 (TEEEKQLFLS…AADGLAESKA (79 aa)) is domain II. Residues 143-146 (PVQT) form a flexible linker region. The domain III stretch occupies residues 147-196 (VDNQELEEAMEAMLALGYKATELKKIKKFFEGTTDTAENYIKSALKMLVK).

It belongs to the RuvA family. Homotetramer. Forms an RuvA(8)-RuvB(12)-Holliday junction (HJ) complex. HJ DNA is sandwiched between 2 RuvA tetramers; dsDNA enters through RuvA and exits via RuvB. An RuvB hexamer assembles on each DNA strand where it exits the tetramer. Each RuvB hexamer is contacted by two RuvA subunits (via domain III) on 2 adjacent RuvB subunits; this complex drives branch migration. In the full resolvosome a probable DNA-RuvA(4)-RuvB(12)-RuvC(2) complex forms which resolves the HJ.

Its subcellular location is the cytoplasm. In terms of biological role, the RuvA-RuvB-RuvC complex processes Holliday junction (HJ) DNA during genetic recombination and DNA repair, while the RuvA-RuvB complex plays an important role in the rescue of blocked DNA replication forks via replication fork reversal (RFR). RuvA specifically binds to HJ cruciform DNA, conferring on it an open structure. The RuvB hexamer acts as an ATP-dependent pump, pulling dsDNA into and through the RuvAB complex. HJ branch migration allows RuvC to scan DNA until it finds its consensus sequence, where it cleaves and resolves the cruciform DNA. This chain is Holliday junction branch migration complex subunit RuvA, found in Streptococcus gordonii (strain Challis / ATCC 35105 / BCRC 15272 / CH1 / DL1 / V288).